The chain runs to 166 residues: Transcription antitermination protein NusB (166 aa).

Over residues 1 to 15 (MISDDSDRFNPRDPK) the composition is skewed to basic and acidic residues. The tract at residues 1-30 (MISDDSDRFNPRDPKPANAGKPSKSAKRRE) is disordered.

Belongs to the NusB family.

Its function is as follows. Involved in transcription antitermination. Required for transcription of ribosomal RNA (rRNA) genes. Binds specifically to the boxA antiterminator sequence of the ribosomal RNA (rrn) operons. The protein is Transcription antitermination protein NusB of Pseudomonas fluorescens (strain ATCC BAA-477 / NRRL B-23932 / Pf-5).